Consider the following 205-residue polypeptide: MIDPDGFRPNVGIVLMRQDGQVFWARRVRRDGWQFPQGGMNTDETPVEAMYRELREETGLLPEHVELLGATPGWLRYRLPSRAVRRNERQVCIGQKQVWFLLRFTGDESHLKLDHTDTPEFDHWRWVDFWYPVEHVVMFKRGVYARALRHLAPIAQNLAGPAAVGAMPERALEAWLPGSSAAGHDSPRKRPRKRSGARPMRINND.

The region spanning 6–149 is the Nudix hydrolase domain; it reads GFRPNVGIVL…KRGVYARALR (144 aa). Residues 38–59 carry the Nudix box motif; it reads GGMNTDETPVEAMYRELREETG. The tract at residues 177–205 is disordered; sequence PGSSAAGHDSPRKRPRKRSGARPMRINND. The span at 187–196 shows a compositional bias: basic residues; sequence PRKRPRKRSG.

The protein belongs to the Nudix hydrolase family. RppH subfamily. It depends on a divalent metal cation as a cofactor.

Its function is as follows. Accelerates the degradation of transcripts by removing pyrophosphate from the 5'-end of triphosphorylated RNA, leading to a more labile monophosphorylated state that can stimulate subsequent ribonuclease cleavage. This chain is RNA pyrophosphohydrolase, found in Xanthomonas oryzae pv. oryzae (strain MAFF 311018).